The chain runs to 323 residues: GMP reductase (323 aa).

Residue C174 is the Thioimidate intermediate of the active site. 203–226 (IIADGGIRHNGDIAKSVRFGASMV) contacts NADP(+).

It belongs to the IMPDH/GMPR family. GuaC type 2 subfamily.

The enzyme catalyses IMP + NH4(+) + NADP(+) = GMP + NADPH + 2 H(+). In terms of biological role, catalyzes the irreversible NADPH-dependent deamination of GMP to IMP. It functions in the conversion of nucleobase, nucleoside and nucleotide derivatives of G to A nucleotides, and in maintaining the intracellular balance of A and G nucleotides. The polypeptide is GMP reductase (Oenococcus oeni (strain ATCC BAA-331 / PSU-1)).